A 452-amino-acid polypeptide reads, in one-letter code: MSLVIQPLLMRALNPNLSSILISGRGFSLIQHRRFAFRAGSGNNNSEQNQVHINTAPIEFTANLLAGKNETEAETEGLKGTALKALRCNDTTSDSEPQHNMENLPFKVKLVDKGQRKQIKESKARVEPRPEVSLKKTYIEPYLQLSKPRLTVLVMLSAICSYALSPYPATVLQLLSLTVGTTLCSASANAINMGREPDFDRQMIRTQARPVVRGIVSPNQAFKFATAAGTLGTSILWLGVNPTVAFLGFSNIALYAWLYTSLKRKHIINTWVGALVGAIPPLMGWAASSPLSHPGAWCLAGLLYAWQFPHFNTLSHNIRNEYKNAGYVMTAWKNPKLNARVALRYSLLMFPLCFGLSYFNVTDWYYQLDSAFVNAWMSLWAFKFYFQQKRNYSKEIYNNKTEFNKGLAMANVYARRTFWVSVLHLPAVLILAILHKKDRWDWLFEDKKQLSA.

Residues 1 to 27 (MSLVIQPLLMRALNPNLSSILISGRGF) constitute a mitochondrion transit peptide. The next 7 membrane-spanning stretches (helical) occupy residues 152-172 (VLVM…ATVL), 235-255 (ILWL…IALY), 267-287 (IINT…GWAA), 291-311 (LSHP…FPHF), 341-361 (VALR…YFNV), 364-386 (WYYQ…KFYF), and 417-437 (TFWV…LHKK).

Belongs to the UbiA prenyltransferase family.

It is found in the mitochondrion membrane. Its function is as follows. Converts protoheme IX and farnesyl diphosphate to heme O. The polypeptide is Protoheme IX farnesyltransferase, mitochondrial (COX10) (Kluyveromyces lactis (strain ATCC 8585 / CBS 2359 / DSM 70799 / NBRC 1267 / NRRL Y-1140 / WM37) (Yeast)).